A 236-amino-acid chain; its full sequence is 7-cyano-7-deazaguanine synthase 2 (236 aa).

11–21 (FSGGQDSATCL) contributes to the ATP binding site. Residues cysteine 199, cysteine 214, cysteine 217, and cysteine 220 each contribute to the Zn(2+) site.

It belongs to the QueC family. The cofactor is Zn(2+).

It carries out the reaction 7-carboxy-7-deazaguanine + NH4(+) + ATP = 7-cyano-7-deazaguanine + ADP + phosphate + H2O + H(+). The protein operates within purine metabolism; 7-cyano-7-deazaguanine biosynthesis. Functionally, catalyzes the ATP-dependent conversion of 7-carboxy-7-deazaguanine (CDG) to 7-cyano-7-deazaguanine (preQ(0)). This chain is 7-cyano-7-deazaguanine synthase 2, found in Sphingopyxis alaskensis (strain DSM 13593 / LMG 18877 / RB2256) (Sphingomonas alaskensis).